The following is a 67-amino-acid chain: Spiniferin (67 aa).

An N-terminal signal peptide occupies residues 1–23; that stretch reads MKTQLAILLITLVLFQMFSQSDA. Leu-36 carries the post-translational modification Leucine amide. A propeptide spanning residues 40–67 is cleaved from the precursor; it reads GLNDLSDLDELFDGEISKADLDFLREIM.

The protein belongs to the non-disulfide-bridged peptide (NDBP) superfamily. Short antimicrobial peptide (group 4) family. In terms of tissue distribution, expressed by the venom gland.

The protein resides in the secreted. Its subcellular location is the target cell membrane. In terms of biological role, alpha-helical and amphipathic peptide with weak antimicrobial activities against both Gram-positive (MIC=41 uM to &gt;82 uM) and Gram-negative (MIC&gt;82 uM) bacteria. It has extremely weak hemolytic activity against human erythrocytes. In Heterometrus spinifer (Asia giant forest scorpion), this protein is Spiniferin.